Reading from the N-terminus, the 209-residue chain is Orotate phosphoribosyltransferase (209 aa).

Residues Arg96, Lys100, His102, and 122–130 each bind 5-phospho-alpha-D-ribose 1-diphosphate; that span reads EDLISTGGS. Orotate is bound at residue Ser126.

The protein belongs to the purine/pyrimidine phosphoribosyltransferase family. PyrE subfamily. Homodimer. Mg(2+) serves as cofactor.

The catalysed reaction is orotidine 5'-phosphate + diphosphate = orotate + 5-phospho-alpha-D-ribose 1-diphosphate. It participates in pyrimidine metabolism; UMP biosynthesis via de novo pathway; UMP from orotate: step 1/2. Its function is as follows. Catalyzes the transfer of a ribosyl phosphate group from 5-phosphoribose 1-diphosphate to orotate, leading to the formation of orotidine monophosphate (OMP). In Streptococcus sanguinis (strain SK36), this protein is Orotate phosphoribosyltransferase.